The primary structure comprises 370 residues: Ganglioside-induced differentiation-associated protein 1-like 1 (370 aa).

The GST N-terminal domain occupies 45–129 (ESLVLYHWTQ…YVERTFTGEH (85 aa)). One can recognise a GST C-terminal domain in the interval 177–344 (PKYATAEIRR…RLVKRKPPSF (168 aa)).

Belongs to the GST superfamily.

This Mus musculus (Mouse) protein is Ganglioside-induced differentiation-associated protein 1-like 1 (Gdap1l1).